Here is a 370-residue protein sequence, read N- to C-terminus: Putative glutamate--cysteine ligase 2 (370 aa).

It belongs to the glutamate--cysteine ligase type 2 family. YbdK subfamily.

It catalyses the reaction L-cysteine + L-glutamate + ATP = gamma-L-glutamyl-L-cysteine + ADP + phosphate + H(+). In terms of biological role, ATP-dependent carboxylate-amine ligase which exhibits weak glutamate--cysteine ligase activity. In Herminiimonas arsenicoxydans, this protein is Putative glutamate--cysteine ligase 2.